Here is a 103-residue protein sequence, read N- to C-terminus: Large ribosomal subunit protein uL24 (103 aa).

Belongs to the universal ribosomal protein uL24 family. In terms of assembly, part of the 50S ribosomal subunit.

Functionally, one of two assembly initiator proteins, it binds directly to the 5'-end of the 23S rRNA, where it nucleates assembly of the 50S subunit. One of the proteins that surrounds the polypeptide exit tunnel on the outside of the subunit. In Sinorhizobium fredii (strain NBRC 101917 / NGR234), this protein is Large ribosomal subunit protein uL24.